Consider the following 123-residue polypeptide: Large ribosomal subunit protein bL12 (123 aa).

Belongs to the bacterial ribosomal protein bL12 family. Homodimer. Part of the ribosomal stalk of the 50S ribosomal subunit. Forms a multimeric L10(L12)X complex, where L10 forms an elongated spine to which 2 to 4 L12 dimers bind in a sequential fashion. Binds GTP-bound translation factors.

In terms of biological role, forms part of the ribosomal stalk which helps the ribosome interact with GTP-bound translation factors. Is thus essential for accurate translation. This chain is Large ribosomal subunit protein bL12, found in Bartonella henselae (strain ATCC 49882 / DSM 28221 / CCUG 30454 / Houston 1) (Rochalimaea henselae).